The following is a 391-amino-acid chain: Probable sugar efflux transporter (391 aa).

12 helical membrane passes run valine 16–leucine 36, valine 51–leucine 71, leucine 82–phenylalanine 102, tryptophan 103–threonine 123, glutamine 138–glycine 158, phenylalanine 171–proline 191, proline 210–tyrosine 230, isoleucine 247–glycine 267, phenylalanine 277–asparagine 297, tryptophan 300–leucine 320, isoleucine 338–isoleucine 358, and leucine 361–leucine 381.

The protein belongs to the major facilitator superfamily. SotB (TC 2.A.1.2) family.

It localises to the cell inner membrane. In terms of biological role, involved in the efflux of sugars. The physiological role may be the reduction of the intracellular concentration of toxic sugars or sugar metabolites. The sequence is that of Probable sugar efflux transporter from Helicobacter pylori (strain G27).